Reading from the N-terminus, the 132-residue chain is Riboflavin kinase (132 aa).

CDP is bound at residue Gly-13–Ser-18. Thr-40 and Asn-42 together coordinate Mg(2+). FMN is bound by residues Thr-98 and Glu-106. Val-111–Arg-114 serves as a coordination point for CDP.

This sequence belongs to the archaeal riboflavin kinase family. Mg(2+) serves as cofactor.

The enzyme catalyses riboflavin + CTP = CDP + FMN + H(+). It participates in cofactor biosynthesis; FMN biosynthesis; FMN from riboflavin (CTP route): step 1/1. Its function is as follows. Catalyzes the CTP-dependent phosphorylation of riboflavin (vitamin B2) to form flavin mononucleotide (FMN). In Aeropyrum pernix (strain ATCC 700893 / DSM 11879 / JCM 9820 / NBRC 100138 / K1), this protein is Riboflavin kinase.